A 69-amino-acid polypeptide reads, in one-letter code: MNRSHQLLSVLAIIFYGVMVVGSMMQFLAYYELTSLPSVRQVSLMLVGICAVVCFYASIVYFVEISSRG.

2 consecutive transmembrane segments (helical) span residues leucine 7–phenylalanine 27 and valine 42–phenylalanine 62.

The protein resides in the host membrane. This Haloarcula hispanica (His1V) protein is Putative transmembrane protein ORF34.